The following is a 104-amino-acid chain: Circadian clock oscillator protein KaiB (104 aa).

It belongs to the KaiB family. The KaiABC complex composition changes during the circadian cycle to control KaiC phosphorylation. Complexes KaiC(6), KaiA(2-4):KaiC(6), KaiB(6):KaiC(6) and KaiC(6):KaiB(6):KaiA(12) are among the most important forms, many form cooperatively. Undergoes a major conformational rearrangment; in the free state forms homotetramers as a dimer of dimers. When bound to the CI domain of KaiC switches to a monomeric thioredoxin-fold (KaiB(fs)). KaiB(fs) binds CikA, leading it to dephosphorylate phospho-RpaA.

Its function is as follows. Key component of the KaiABC oscillator complex, which constitutes the main circadian regulator in cyanobacteria. Complex composition changes during the circadian cycle to control KaiC phosphorylation. KaiA stimulates KaiC autophosphorylation, while KaiB sequesters KaiA, leading to KaiC autodephosphorylation. Phospho-Ser-431 KaiC accumulation triggers binding of KaiB to form the KaiB(6):KaiC(6) complex, leading to changes in output regulators CikA and SasA. KaiB switches to a thioredoxin-like fold (KaiB(fs)) when bound to KaiC. KaiB(6):KaiC(6) formation exposes a site for KaiA binding that sequesters KaiA from KaiC, making the KaiC(6):KaiB(6):KaiA(12) complex that results in KaiC autodephosphorylation. In terms of biological role, a metamorphic protein which reversibly switches between an inactive tetrameric fold and a rare, thioredoxin-like monomeric fold (KaiB(fs)). KaiB(fs) binds phospho-KaiC, KaiA and CikA. KaiA and CikA compete for binding to KaiB(fs), and KaiB(fs) and SasA compete for binding to KaiC, thus the clock oscillator and output signal pathway are tightly coupled. The sequence is that of Circadian clock oscillator protein KaiB from Microcystis aeruginosa (strain NIES-843 / IAM M-2473).